The chain runs to 90 residues: YcgL domain-containing protein YE2368 (90 aa).

Residues 1–85 (MLCAIYRSPK…PPESLLKMHL (85 aa)) enclose the YcgL domain.

The protein is YcgL domain-containing protein YE2368 of Yersinia enterocolitica serotype O:8 / biotype 1B (strain NCTC 13174 / 8081).